The primary structure comprises 128 residues: Large ribosomal subunit protein bL19 (128 aa).

The protein belongs to the bacterial ribosomal protein bL19 family.

In terms of biological role, this protein is located at the 30S-50S ribosomal subunit interface and may play a role in the structure and function of the aminoacyl-tRNA binding site. This Azoarcus sp. (strain BH72) protein is Large ribosomal subunit protein bL19.